A 137-amino-acid polypeptide reads, in one-letter code: MEQTLSIIKPDAVAKNVIGQILARFEAAGLRIAATKKTRLSRVDAEAFYAIHAERPFFKDLVDFMISGPVVVTVLEGENAMAKNRELMGATNPAEAEPGTIRADFADSIDANAVHGSDSVENAEIEINFFFAKREIH.

Positions 9, 57, 85, 91, 102, and 112 each coordinate ATP. Catalysis depends on His115, which acts as the Pros-phosphohistidine intermediate.

This sequence belongs to the NDK family. In terms of assembly, homotetramer. Mg(2+) is required as a cofactor.

The protein localises to the cytoplasm. It carries out the reaction a 2'-deoxyribonucleoside 5'-diphosphate + ATP = a 2'-deoxyribonucleoside 5'-triphosphate + ADP. The catalysed reaction is a ribonucleoside 5'-diphosphate + ATP = a ribonucleoside 5'-triphosphate + ADP. Its function is as follows. Major role in the synthesis of nucleoside triphosphates other than ATP. The ATP gamma phosphate is transferred to the NDP beta phosphate via a ping-pong mechanism, using a phosphorylated active-site intermediate. This Sulfurovum sp. (strain NBC37-1) protein is Nucleoside diphosphate kinase.